The chain runs to 248 residues: Transmembrane protein 182 (248 aa).

The signal sequence occupies residues 1 to 26 (MKIHVAGFFAGLFGALATLFILLSFG). Residues 27-136 (TDYWLLASET…IIYRGFWSVS (110 aa)) lie on the Extracellular side of the membrane. N-linked (GlcNAc...) asparagine glycans are attached at residues N66 and N119. The helical transmembrane segment at 137–157 (MLVGVAAVVAGGFIIICAAPF) threads the bilayer. Over 158 to 167 (ASHRLYKAGG) the chain is Cytoplasmic. Residues 168–188 (GLYLISGFFVLVVTAMYVIWI) traverse the membrane as a helical segment. Topologically, residues 189-218 (DVLDVISLYTEYQKLNKCADFELNKTYGLS) are extracellular. Residue N212 is glycosylated (N-linked (GlcNAc...) asparagine). Residues 219 to 239 (FMFAPVGVFFCFLSGLLFLVI) traverse the membrane as a helical segment. Topologically, residues 240–248 (GRTVHHQYN) are cytoplasmic.

It belongs to the TMEM182 family.

It localises to the cell membrane. In terms of biological role, may negatively regulate myogenesis and skeletal muscle regeneration. This is Transmembrane protein 182 (tmem182a) from Danio rerio (Zebrafish).